A 427-amino-acid polypeptide reads, in one-letter code: MSRSETLFANAQKHIPGGVNSPVRAFKSVGGTPLFFKHAAGAYVTDEDDKRYVDYVGSWGPMILGHSHPDVLDAVRSQLEHGLSYGAPTAMETEMADLVCELVPSMEMVRMVSSGTEATMSAIRLARGFTGRDSILKFEGCYHGHSDSLLVKAGSGALTLGVPSSPGVPAAFAKHTLTVPFNNLDAVRDLLAEVGQEVACIIVEPVAGNMNCVPPAPGYLQGLRELCDEHGVVLIFDEVMTGFRVALGGAQAYYGVTPDLSTFGKIIGGGMPVGCFGGKREIMSHIAPLGPVYQAGTLSGNPLAMAAGLTTLRLISRPGFHDELSDYTRRLLEGLQQRADAAGIPFVTTQAGGMFGLYFSEADEIVTFEDVMTSDSERFKRFFHLMLDGGVYLAPSAFEAGFTSIAHGDAELKLTLDAAEKAFAALK.

Lysine 265 is modified (N6-(pyridoxal phosphate)lysine).

It belongs to the class-III pyridoxal-phosphate-dependent aminotransferase family. HemL subfamily. As to quaternary structure, homodimer. Pyridoxal 5'-phosphate serves as cofactor.

The protein localises to the cytoplasm. It carries out the reaction (S)-4-amino-5-oxopentanoate = 5-aminolevulinate. The protein operates within porphyrin-containing compound metabolism; protoporphyrin-IX biosynthesis; 5-aminolevulinate from L-glutamyl-tRNA(Glu): step 2/2. This is Glutamate-1-semialdehyde 2,1-aminomutase from Pseudomonas syringae pv. syringae (strain B728a).